Consider the following 374-residue polypeptide: Tryptophan--tRNA ligase (374 aa).

A 'HIGH' region motif is present at residues 81-89 (PSGPVHIGH). The 'KMSKS' region motif lies at 258 to 262 (KMSAS).

This sequence belongs to the class-I aminoacyl-tRNA synthetase family.

It localises to the cytoplasm. The enzyme catalyses tRNA(Trp) + L-tryptophan + ATP = L-tryptophyl-tRNA(Trp) + AMP + diphosphate + H(+). This is Tryptophan--tRNA ligase from Pyrobaculum arsenaticum (strain DSM 13514 / JCM 11321 / PZ6).